The chain runs to 430 residues: Enolase (430 aa).

Glutamine 167 lines the (2R)-2-phosphoglycerate pocket. Glutamate 209 serves as the catalytic Proton donor. Aspartate 245, glutamate 286, and aspartate 313 together coordinate Mg(2+). (2R)-2-phosphoglycerate is bound by residues lysine 338, arginine 367, serine 368, and lysine 389. Residue lysine 338 is the Proton acceptor of the active site.

The protein belongs to the enolase family. Mg(2+) serves as cofactor.

It localises to the cytoplasm. The protein localises to the secreted. The protein resides in the cell surface. It carries out the reaction (2R)-2-phosphoglycerate = phosphoenolpyruvate + H2O. It participates in carbohydrate degradation; glycolysis; pyruvate from D-glyceraldehyde 3-phosphate: step 4/5. Functionally, catalyzes the reversible conversion of 2-phosphoglycerate (2-PG) into phosphoenolpyruvate (PEP). It is essential for the degradation of carbohydrates via glycolysis. The polypeptide is Enolase (Synechococcus sp. (strain CC9311)).